We begin with the raw amino-acid sequence, 148 residues long: UPF0260 protein YE2365 (148 aa).

It belongs to the UPF0260 family.

The sequence is that of UPF0260 protein YE2365 from Yersinia enterocolitica serotype O:8 / biotype 1B (strain NCTC 13174 / 8081).